A 145-amino-acid polypeptide reads, in one-letter code: Large-conductance mechanosensitive channel (145 aa).

The next 2 helical transmembrane spans lie at 30–50 and 74–94; these read VAVV…AWLM and GELV…FLII.

Belongs to the MscL family. In terms of assembly, homopentamer.

The protein resides in the cell inner membrane. In terms of biological role, channel that opens in response to stretch forces in the membrane lipid bilayer. May participate in the regulation of osmotic pressure changes within the cell. The polypeptide is Large-conductance mechanosensitive channel (Synechocystis sp. (strain ATCC 27184 / PCC 6803 / Kazusa)).